A 235-amino-acid polypeptide reads, in one-letter code: Adenosine 5'-phosphosulfate reductase (235 aa).

[4Fe-4S] cluster contacts are provided by cysteine 121, cysteine 122, cysteine 204, and cysteine 207. Catalysis depends on cysteine 230, which acts as the Nucleophile; cysteine thiosulfonate intermediate.

It belongs to the PAPS reductase family. CysH subfamily. [4Fe-4S] cluster serves as cofactor.

It is found in the cytoplasm. It catalyses the reaction [thioredoxin]-disulfide + sulfite + AMP + 2 H(+) = adenosine 5'-phosphosulfate + [thioredoxin]-dithiol. Its pathway is sulfur metabolism; hydrogen sulfide biosynthesis; sulfite from sulfate. Functionally, catalyzes the formation of sulfite from adenosine 5'-phosphosulfate (APS) using thioredoxin as an electron donor. The polypeptide is Adenosine 5'-phosphosulfate reductase (Geobacillus thermodenitrificans (strain NG80-2)).